Here is a 105-residue protein sequence, read N- to C-terminus: MAEWNGEYISPYAEHGKKSEQVKKITVSIPLKVLKILTDERTRRQVNNLKHATNSELLCEAFLHAFTGQPLPNDEDLRKERNDEIPEEAKEIMRQRGVDPETWEY.

The protein belongs to the MetJ family. In terms of assembly, homodimer.

It is found in the cytoplasm. Its function is as follows. This regulatory protein, when combined with SAM (S-adenosylmethionine) represses the expression of the methionine regulon and of enzymes involved in SAM synthesis. In Proteus mirabilis (strain HI4320), this protein is Met repressor.